The sequence spans 494 residues: Aspartyl/glutamyl-tRNA(Asn/Gln) amidotransferase subunit B (494 aa).

It belongs to the GatB/GatE family. GatB subfamily. In terms of assembly, heterotrimer of A, B and C subunits.

The catalysed reaction is L-glutamyl-tRNA(Gln) + L-glutamine + ATP + H2O = L-glutaminyl-tRNA(Gln) + L-glutamate + ADP + phosphate + H(+). It catalyses the reaction L-aspartyl-tRNA(Asn) + L-glutamine + ATP + H2O = L-asparaginyl-tRNA(Asn) + L-glutamate + ADP + phosphate + 2 H(+). Its function is as follows. Allows the formation of correctly charged Asn-tRNA(Asn) or Gln-tRNA(Gln) through the transamidation of misacylated Asp-tRNA(Asn) or Glu-tRNA(Gln) in organisms which lack either or both of asparaginyl-tRNA or glutaminyl-tRNA synthetases. The reaction takes place in the presence of glutamine and ATP through an activated phospho-Asp-tRNA(Asn) or phospho-Glu-tRNA(Gln). This chain is Aspartyl/glutamyl-tRNA(Asn/Gln) amidotransferase subunit B, found in Rhizorhabdus wittichii (strain DSM 6014 / CCUG 31198 / JCM 15750 / NBRC 105917 / EY 4224 / RW1) (Sphingomonas wittichii).